The sequence spans 251 residues: Ubiquinone/menaquinone biosynthesis C-methyltransferase UbiE (251 aa).

S-adenosyl-L-methionine contacts are provided by residues threonine 74, aspartate 95, 123-124 (NA), and serine 140.

It belongs to the class I-like SAM-binding methyltransferase superfamily. MenG/UbiE family.

It catalyses the reaction a 2-demethylmenaquinol + S-adenosyl-L-methionine = a menaquinol + S-adenosyl-L-homocysteine + H(+). The enzyme catalyses a 2-methoxy-6-(all-trans-polyprenyl)benzene-1,4-diol + S-adenosyl-L-methionine = a 5-methoxy-2-methyl-3-(all-trans-polyprenyl)benzene-1,4-diol + S-adenosyl-L-homocysteine + H(+). It functions in the pathway quinol/quinone metabolism; menaquinone biosynthesis; menaquinol from 1,4-dihydroxy-2-naphthoate: step 2/2. Its pathway is cofactor biosynthesis; ubiquinone biosynthesis. Functionally, methyltransferase required for the conversion of demethylmenaquinol (DMKH2) to menaquinol (MKH2) and the conversion of 2-polyprenyl-6-methoxy-1,4-benzoquinol (DDMQH2) to 2-polyprenyl-3-methyl-6-methoxy-1,4-benzoquinol (DMQH2). The polypeptide is Ubiquinone/menaquinone biosynthesis C-methyltransferase UbiE (Klebsiella pneumoniae (strain 342)).